Reading from the N-terminus, the 106-residue chain is Small ribosomal subunit protein uS10 (106 aa).

This sequence belongs to the universal ribosomal protein uS10 family. In terms of assembly, part of the 30S ribosomal subunit.

In terms of biological role, involved in the binding of tRNA to the ribosomes. In Pyrobaculum arsenaticum (strain DSM 13514 / JCM 11321 / PZ6), this protein is Small ribosomal subunit protein uS10.